Reading from the N-terminus, the 1022-residue chain is Integrator complex subunit 4 (1022 aa).

The 1D-myo-inositol hexakisphosphate site is built by T148 and K184. The tract at residues 818 to 840 (KDEEEKPPVVETDMPMKESVSRD) is disordered.

The protein belongs to the Integrator subunit 4 family. In terms of assembly, belongs to the multiprotein complex Integrator, at least composed of IntS1, IntS2, IntS3, IntS4, omd/IntS5, IntS6, defl/IntS7, IntS8, IntS9, IntS10, IntS11, IntS12, asun/IntS13, IntS14 and IntS15. The core complex associates with protein phosphatase 2A subunits mts/PP2A and Pp2A-29B, to form the Integrator-PP2A (INTAC) complex. IntS4 is part of the RNA endonuclease subcomplex, composed of IntS4, IntS9, IntS11 and inositol hexakisphosphate (InsP6).

It localises to the nucleus. Component of the integrator complex, a multiprotein complex that terminates RNA polymerase II (Pol II) transcription in the promoter-proximal region of genes. The integrator complex provides a quality checkpoint during transcription elongation by driving premature transcription termination of transcripts that are unfavorably configured for transcriptional elongation: the complex terminates transcription by (1) catalyzing dephosphorylation of the C-terminal domain (CTD) of Pol II subunit Polr2A/Rbp1 and Spt5, and (2) degrading the exiting nascent RNA transcript via endonuclease activity. The integrator complex is also involved in the 3'-end processing of the U7 snRNA, and also the spliceosomal snRNAs U1, U2, U4 and U5. The chain is Integrator complex subunit 4 from Drosophila melanogaster (Fruit fly).